Reading from the N-terminus, the 270-residue chain is 4-hydroxy-tetrahydrodipicolinate reductase (270 aa).

NAD(+) is bound by residues 8–13 (GALGRM), Asp-34, 102–104 (GTT), and 128–131 (SQNY). His-160 functions as the Proton donor/acceptor in the catalytic mechanism. Residue His-161 participates in (S)-2,3,4,5-tetrahydrodipicolinate binding. The Proton donor role is filled by Lys-164. 170–171 (GT) is a (S)-2,3,4,5-tetrahydrodipicolinate binding site.

The protein belongs to the DapB family.

It localises to the cytoplasm. The catalysed reaction is (S)-2,3,4,5-tetrahydrodipicolinate + NAD(+) + H2O = (2S,4S)-4-hydroxy-2,3,4,5-tetrahydrodipicolinate + NADH + H(+). The enzyme catalyses (S)-2,3,4,5-tetrahydrodipicolinate + NADP(+) + H2O = (2S,4S)-4-hydroxy-2,3,4,5-tetrahydrodipicolinate + NADPH + H(+). Its pathway is amino-acid biosynthesis; L-lysine biosynthesis via DAP pathway; (S)-tetrahydrodipicolinate from L-aspartate: step 4/4. Catalyzes the conversion of 4-hydroxy-tetrahydrodipicolinate (HTPA) to tetrahydrodipicolinate. The protein is 4-hydroxy-tetrahydrodipicolinate reductase of Methanococcus maripaludis (strain C5 / ATCC BAA-1333).